Reading from the N-terminus, the 1111-residue chain is uncharacterized protein (1111 aa).

The first 31 residues, 1-31, serve as a signal peptide directing secretion; sequence MIRKLMKIPPFFTALFASAMFTLSVSQGVLA. Transmembrane regions (helical) follow at residues 490–510, 538–558, 572–592, 620–640, 644–664, 694–714, 797–817, 840–860, 885–905, 922–942, and 1003–1023; these read LPYLLMYFLGLFIVGGAIFKF, LALLLTAFLTLSSTLWFLAVC, FWHWSFSMAGYWWFFTFWISL, IIVVVVLLLNTSVFSNVTDAG, DVLGQINTIAALIFCAAIIAP, IPVGLIVLIVLGYYYTALNLI, FIWTALLGIFYYVWSDLVTVV, SITLFNLLVALVIVGITYVLV, ITTLLTYIFIAIGGAWAFATL, GLGFGMQEIFANFVSGIILLF, and LVISVGVAYGSDLTLVRQLLL.

Belongs to the MscS (TC 1.A.23) family.

It localises to the cell membrane. This is an uncharacterized protein from Haemophilus influenzae (strain ATCC 51907 / DSM 11121 / KW20 / Rd).